The primary structure comprises 102 residues: Large ribosomal subunit protein bL21 (102 aa).

Belongs to the bacterial ribosomal protein bL21 family. As to quaternary structure, part of the 50S ribosomal subunit. Contacts protein L20.

Functionally, this protein binds to 23S rRNA in the presence of protein L20. The protein is Large ribosomal subunit protein bL21 of Ehrlichia chaffeensis (strain ATCC CRL-10679 / Arkansas).